Here is a 69-residue protein sequence, read N- to C-terminus: Putative membrane protein insertion efficiency factor (69 aa).

This sequence belongs to the UPF0161 family.

Its subcellular location is the cell inner membrane. In terms of biological role, could be involved in insertion of integral membrane proteins into the membrane. This is Putative membrane protein insertion efficiency factor from Novosphingobium aromaticivorans (strain ATCC 700278 / DSM 12444 / CCUG 56034 / CIP 105152 / NBRC 16084 / F199).